The following is a 429-amino-acid chain: Histidine--tRNA ligase (429 aa).

The protein belongs to the class-II aminoacyl-tRNA synthetase family. As to quaternary structure, homodimer.

It is found in the cytoplasm. It catalyses the reaction tRNA(His) + L-histidine + ATP = L-histidyl-tRNA(His) + AMP + diphosphate + H(+). This is Histidine--tRNA ligase from Prochlorococcus marinus (strain MIT 9515).